The primary structure comprises 160 residues: Cyclic pyranopterin monophosphate synthase (160 aa).

Substrate-binding positions include 77–79 (MCH) and 114–115 (ME). Aspartate 129 is a catalytic residue.

The protein belongs to the MoaC family. In terms of assembly, homohexamer; trimer of dimers.

It carries out the reaction (8S)-3',8-cyclo-7,8-dihydroguanosine 5'-triphosphate = cyclic pyranopterin phosphate + diphosphate. The protein operates within cofactor biosynthesis; molybdopterin biosynthesis. In terms of biological role, catalyzes the conversion of (8S)-3',8-cyclo-7,8-dihydroguanosine 5'-triphosphate to cyclic pyranopterin monophosphate (cPMP). The polypeptide is Cyclic pyranopterin monophosphate synthase (Listeria monocytogenes serotype 4a (strain HCC23)).